Reading from the N-terminus, the 243-residue chain is Carboxy-S-adenosyl-L-methionine synthase (243 aa).

Residues Tyr40, 65–67, 90–91, 118–119, Asn133, and Arg200 each bind S-adenosyl-L-methionine; these read GCS, DN, and DI.

Belongs to the class I-like SAM-binding methyltransferase superfamily. Cx-SAM synthase family. As to quaternary structure, homodimer.

It catalyses the reaction prephenate + S-adenosyl-L-methionine = carboxy-S-adenosyl-L-methionine + 3-phenylpyruvate + H2O. Its function is as follows. Catalyzes the conversion of S-adenosyl-L-methionine (SAM) to carboxy-S-adenosyl-L-methionine (Cx-SAM). This chain is Carboxy-S-adenosyl-L-methionine synthase, found in Shewanella sediminis (strain HAW-EB3).